We begin with the raw amino-acid sequence, 948 residues long: Protein translocase subunit SecA (948 aa).

Residues Gln-90, 108 to 112, and Asp-509 contribute to the ATP site; that span reads GEGKT.

It belongs to the SecA family. As to quaternary structure, monomer and homodimer. Part of the essential Sec protein translocation apparatus which comprises SecA, SecYEG and auxiliary proteins SecDF. Other proteins may also be involved.

Its subcellular location is the cell inner membrane. The protein resides in the cellular thylakoid membrane. It is found in the cytoplasm. The catalysed reaction is ATP + H2O + cellular proteinSide 1 = ADP + phosphate + cellular proteinSide 2.. In terms of biological role, part of the Sec protein translocase complex. Interacts with the SecYEG preprotein conducting channel. Has a central role in coupling the hydrolysis of ATP to the transfer of proteins into and across the cell membrane, serving as an ATP-driven molecular motor driving the stepwise translocation of polypeptide chains across the membrane. Functionally, probably participates in protein translocation into and across both the cytoplasmic and thylakoid membranes in cyanobacterial cells. The sequence is that of Protein translocase subunit SecA from Prochlorococcus marinus (strain MIT 9313).